A 784-amino-acid chain; its full sequence is Transcription factor E4F1 (784 aa).

The tract at residues 41–85 (GFLGLPAPFSEEDEDDVHRCGRCQAEFTALEDFVQHKIQKACQRA) is required for ubiquitin ligase activity. The residue at position 50 (S50) is a Phosphoserine. The segment at 184–263 (LLVNKDGRYV…GKSFRESGAL (80 aa)) is mediates dimerization, DNA-binding, transcription repression of CCNA2 and interaction with HMGA2. C2H2-type zinc fingers lie at residues 192–214 (YVCA…MVTH) and 220–242 (HECK…HRRH). A C2H2-type 3; degenerate zinc finger spans residues 248–272 (YKCSKCGKSFRESGALTRHLKSLTP). Positions 369–566 (NLLHQAMQNS…REKGSLVRHV (198 aa)) are mediates interaction with CDKN2A. 5 consecutive C2H2-type zinc fingers follow at residues 435-457 (HPCP…KRGH), 463-485 (FACA…QEVH), 491-513 (FRCG…RRVH), 519-541 (YPCP…FRTH), and 547-569 (HVCQ…VRHH). Residues 435-599 (HPCPQCSETF…LNRHLRTKGG (165 aa)) are interaction with BMI1. Positions 521-580 (CPKCGKRYKTKNAQQVHFRTHLEEKPHVCQFCSRGFREKGSLVRHVRHHTGEKPFKCYKC) are mediates interaction with TP53. Residues 575–597 (FKCYKCGRGFAEHGTLNRHLRTK) form a C2H2-type 9; degenerate zinc finger. The segment at 575 to 597 (FKCYKCGRGFAEHGTLNRHLRTK) is mediates interaction with RASSF1.

In terms of assembly, homodimer; binds DNA as a dimer. Forms a complex with CDKN2A and TP53. Interactions with TP53, RB1, ANP32A, BMI1 and FHL2 regulate E4F1 activity. Interacts with HDAC1, HMGA2 and RASSF1. (Microbial infection) Interacts with HBV protein X. Proteolytic cleavage produces a 50 kDa N-terminal peptide (p50E4F) which has a DNA-binding activity and activates transcription in presence of the adenoviral E1A protein. The major full-length protein (p120E4F) functions as a repressor of transcription. Post-translationally, phosphorylated; p120E4F and p50E4F are both phosphorylated. Phosphorylation is cell cycle-dependent and differentially regulates DNA-binding activity and function of both forms. In terms of processing, may be sumoylated by UBE2I upon interaction with CDKN2A. In terms of tissue distribution, ubiquitously expressed.

It localises to the nucleus. Its subcellular location is the nucleoplasm. The protein localises to the cytoplasm. The catalysed reaction is S-ubiquitinyl-[E2 ubiquitin-conjugating enzyme]-L-cysteine + [acceptor protein]-L-lysine = [E2 ubiquitin-conjugating enzyme]-L-cysteine + N(6)-ubiquitinyl-[acceptor protein]-L-lysine.. The protein operates within protein modification; protein ubiquitination. In terms of biological role, may function as a transcriptional repressor. May also function as a ubiquitin ligase mediating ubiquitination of chromatin-associated TP53. Functions in cell survival and proliferation through control of the cell cycle. Functions in the p53 and pRB tumor suppressor pathways and regulates the cyclin CCNA2 transcription. Functionally, identified as a cellular target of the adenoviral oncoprotein E1A, it is required for both transcriptional activation and repression of viral genes. This is Transcription factor E4F1 (E4F1) from Homo sapiens (Human).